A 297-amino-acid polypeptide reads, in one-letter code: uncharacterized protein (297 aa).

Residues 46 to 229 form a disordered region; sequence LGAGGPPPPP…RPPPYIAPPP (184 aa). The span at 65–81 shows a compositional bias: pro residues; it reads PEGPGGPPQHAPPNPPP. The span at 90–100 shows a compositional bias: gly residues; that stretch reads RGGGAGGAGDG. Over residues 106-117 the composition is skewed to acidic residues; it reads DAAEEYGPEDLD. A compositionally biased stretch (basic residues) spans 137–151; that stretch reads HQTRGPGRRAKKRLR. Low complexity predominate over residues 184-201; the sequence is ATPQAAPAAKTTPASPQT. Residues 219–229 are compositionally biased toward pro residues; sequence HRPPPYIAPPP.

This is an uncharacterized protein from Torque teno virus (isolate Human/China/CT23F/2001) (TTV).